A 324-amino-acid chain; its full sequence is AT-hook motif nuclear-localized protein 24 (324 aa).

Residues 1–12 (MDPVQSHGSQSS) show a composition bias toward polar residues. Disordered stretches follow at residues 1-122 (MDPV…KPPI) and 262-324 (MQTP…RPPY). Over residues 24-33 (LHLQQQQQEF) the composition is skewed to low complexity. The span at 69–79 (NIDNIANNSGS) shows a compositional bias: polar residues. The segment covering 88 to 99 (GGSGEGGGGSGG) has biased composition (gly residues). Positions 105 to 117 (RRPRGRPAGSKNK) form a DNA-binding region, a.T hook. Residues 129-268 (ANALRTHVME…EDEMQTPVHG (140 aa)) enclose the PPC domain. Low complexity predominate over residues 280-297 (MMGQQLQHQQQAMSGHQG). Over residues 304–318 (GSVQLQQQHDQSYWS) the composition is skewed to polar residues.

The protein localises to the nucleus. Transcription factor that specifically binds AT-rich DNA sequences related to the nuclear matrix attachment regions (MARs). This Arabidopsis thaliana (Mouse-ear cress) protein is AT-hook motif nuclear-localized protein 24.